The following is a 483-amino-acid chain: ATP synthase subunit beta (483 aa).

162 to 169 (GGAGVGKT) provides a ligand contact to ATP.

The protein belongs to the ATPase alpha/beta chains family. In terms of assembly, F-type ATPases have 2 components, CF(1) - the catalytic core - and CF(0) - the membrane proton channel. CF(1) has five subunits: alpha(3), beta(3), gamma(1), delta(1), epsilon(1). CF(0) has four main subunits: a(1), b(1), b'(1) and c(9-12).

The protein localises to the cellular thylakoid membrane. The enzyme catalyses ATP + H2O + 4 H(+)(in) = ADP + phosphate + 5 H(+)(out). Its function is as follows. Produces ATP from ADP in the presence of a proton gradient across the membrane. The catalytic sites are hosted primarily by the beta subunits. In Synechocystis sp. (strain ATCC 27184 / PCC 6803 / Kazusa), this protein is ATP synthase subunit beta.